The chain runs to 431 residues: Histidinol dehydrogenase (431 aa).

NAD(+) is bound by residues Tyr-127, Gln-185, and Asn-208. Substrate is bound by residues Ser-234, Gln-256, and His-259. Residues Gln-256 and His-259 each coordinate Zn(2+). Residues Glu-323 and His-324 each act as proton acceptor in the active site. The substrate site is built by His-324, Asp-357, Glu-411, and His-416. Asp-357 contributes to the Zn(2+) binding site. His-416 is a Zn(2+) binding site.

The protein belongs to the histidinol dehydrogenase family. It depends on Zn(2+) as a cofactor.

It catalyses the reaction L-histidinol + 2 NAD(+) + H2O = L-histidine + 2 NADH + 3 H(+). Its pathway is amino-acid biosynthesis; L-histidine biosynthesis; L-histidine from 5-phospho-alpha-D-ribose 1-diphosphate: step 9/9. Its function is as follows. Catalyzes the sequential NAD-dependent oxidations of L-histidinol to L-histidinaldehyde and then to L-histidine. The chain is Histidinol dehydrogenase from Vibrio vulnificus (strain CMCP6).